A 61-amino-acid polypeptide reads, in one-letter code: Ferredoxin-2 (61 aa).

4Fe-4S ferredoxin-type domains lie at 2-27 and 28-61; these read HRIT…SAGD and EIYI…IIKV. [4Fe-4S] cluster is bound by residues C8, C11, C14, C18, C37, C40, C49, and C53.

It depends on [4Fe-4S] cluster as a cofactor.

Ferredoxins are iron-sulfur proteins that transfer electrons in a wide variety of metabolic reactions. This Chlorobium limicola protein is Ferredoxin-2.